The sequence spans 316 residues: uncharacterized protein (316 aa).

A disordered region spans residues 1-34 (MATKRKIGDGYSSSDDNQPKRERSEGGEDQQLVP). Residues 17 to 26 (NQPKRERSEG) show a composition bias toward basic and acidic residues.

This is an uncharacterized protein from Lepidoptera (butterflies and moths).